We begin with the raw amino-acid sequence, 396 residues long: 1-deoxy-D-xylulose 5-phosphate reductoisomerase (396 aa).

The NADPH site is built by threonine 15, glycine 16, serine 17, isoleucine 18, glycine 41, and asparagine 129. A 1-deoxy-D-xylulose 5-phosphate-binding site is contributed by lysine 130. Glutamate 131 is an NADPH binding site. Aspartate 155 provides a ligand contact to Mn(2+). 1-deoxy-D-xylulose 5-phosphate contacts are provided by serine 156, glutamate 157, serine 182, and histidine 205. Residue glutamate 157 participates in Mn(2+) binding. Glycine 211 provides a ligand contact to NADPH. 1-deoxy-D-xylulose 5-phosphate is bound by residues serine 218, asparagine 223, lysine 224, and glutamate 227. Glutamate 227 provides a ligand contact to Mn(2+).

It belongs to the DXR family. The cofactor is Mg(2+). Mn(2+) is required as a cofactor.

It catalyses the reaction 2-C-methyl-D-erythritol 4-phosphate + NADP(+) = 1-deoxy-D-xylulose 5-phosphate + NADPH + H(+). Its pathway is isoprenoid biosynthesis; isopentenyl diphosphate biosynthesis via DXP pathway; isopentenyl diphosphate from 1-deoxy-D-xylulose 5-phosphate: step 1/6. Functionally, catalyzes the NADPH-dependent rearrangement and reduction of 1-deoxy-D-xylulose-5-phosphate (DXP) to 2-C-methyl-D-erythritol 4-phosphate (MEP). This Xanthomonas oryzae pv. oryzae (strain PXO99A) protein is 1-deoxy-D-xylulose 5-phosphate reductoisomerase.